We begin with the raw amino-acid sequence, 249 residues long: Coproheme decarboxylase (249 aa).

Fe-coproporphyrin III-binding positions include Arg131, 145–149 (YPMNK), His172, and Gln185. Tyr145 is an active-site residue.

Belongs to the ChdC family. Type 1 subfamily. It depends on Fe-coproporphyrin III as a cofactor.

It catalyses the reaction Fe-coproporphyrin III + 2 H2O2 + 2 H(+) = heme b + 2 CO2 + 4 H2O. The enzyme catalyses Fe-coproporphyrin III + H2O2 + H(+) = harderoheme III + CO2 + 2 H2O. It carries out the reaction harderoheme III + H2O2 + H(+) = heme b + CO2 + 2 H2O. Its pathway is porphyrin-containing compound metabolism; protoheme biosynthesis. Functionally, involved in coproporphyrin-dependent heme b biosynthesis. Catalyzes the decarboxylation of Fe-coproporphyrin III (coproheme) to heme b (protoheme IX), the last step of the pathway. The reaction occurs in a stepwise manner with a three-propionate intermediate. The protein is Coproheme decarboxylase of Staphylococcus carnosus (strain TM300).